A 469-amino-acid chain; its full sequence is Glutamine synthetase (469 aa).

The region spanning 14-98 (NDVKYVDLRF…ITCDVLEPTT (85 aa)) is the GS beta-grasp domain. One can recognise a GS catalytic domain in the interval 106–469 (PRGIAKKAEA…PVEFDMYYSG (364 aa)). Residues glutamate 131 and glutamate 133 each coordinate Mg(2+). Glutamate 209 serves as a coordination point for ATP. The Mg(2+) site is built by glutamate 214 and glutamate 221. L-glutamate contacts are provided by residues 265 to 266 (NG) and glycine 266. Histidine 270 provides a ligand contact to Mg(2+). ATP contacts are provided by residues 272-274 (HQS) and serine 274. L-glutamate-binding residues include arginine 322, glutamate 328, and arginine 340. Positions 340, 345, and 353 each coordinate ATP. A Mg(2+)-binding site is contributed by glutamate 358. An L-glutamate-binding site is contributed by arginine 360. Tyrosine 398 is modified (O-AMP-tyrosine).

The protein belongs to the glutamine synthetase family. Oligomer of 12 subunits arranged in the form of two hexameric ring. Mg(2+) serves as cofactor.

It localises to the cytoplasm. It catalyses the reaction L-glutamate + NH4(+) + ATP = L-glutamine + ADP + phosphate + H(+). With respect to regulation, the activity of this enzyme could be controlled by adenylation under conditions of abundant glutamine. Functionally, catalyzes the ATP-dependent biosynthesis of glutamine from glutamate and ammonia. In Bradyrhizobium diazoefficiens (strain JCM 10833 / BCRC 13528 / IAM 13628 / NBRC 14792 / USDA 110), this protein is Glutamine synthetase.